A 148-amino-acid polypeptide reads, in one-letter code: Transcription antitermination protein NusB (148 aa).

Belongs to the NusB family.

Involved in transcription antitermination. Required for transcription of ribosomal RNA (rRNA) genes. Binds specifically to the boxA antiterminator sequence of the ribosomal RNA (rrn) operons. The polypeptide is Transcription antitermination protein NusB (Novosphingobium aromaticivorans (strain ATCC 700278 / DSM 12444 / CCUG 56034 / CIP 105152 / NBRC 16084 / F199)).